The primary structure comprises 505 residues: RNA-splicing ligase RtcB homolog (505 aa).

Positions 119, 122, 227, 259, and 353 each coordinate Mn(2+). 226 to 230 is a GMP binding site; it reads NHYAE. GMP is bound by residues 353-354, 402-405, Ser409, 428-431, and Lys504; these read HN, GGTM, and HGAG. The active-site GMP-histidine intermediate is His428.

The protein belongs to the RtcB family. Catalytic component of the tRNA-splicing ligase complex. Requires Mn(2+) as cofactor.

It is found in the nucleus. Its subcellular location is the cytoplasm. It catalyses the reaction a 3'-end 3'-phospho-ribonucleotide-RNA + a 5'-end dephospho-ribonucleoside-RNA + GTP = a ribonucleotidyl-ribonucleotide-RNA + GMP + diphosphate. The catalysed reaction is a 3'-end 2',3'-cyclophospho-ribonucleotide-RNA + a 5'-end dephospho-ribonucleoside-RNA + GTP + H2O = a ribonucleotidyl-ribonucleotide-RNA + GMP + diphosphate + H(+). Its function is as follows. Catalytic subunit of the tRNA-splicing ligase complex that acts by directly joining spliced tRNA halves to mature-sized tRNAs by incorporating the precursor-derived splice junction phosphate into the mature tRNA as a canonical 3',5'-phosphodiester. May act as an RNA ligase with broad substrate specificity, and may function toward other RNAs. The chain is RNA-splicing ligase RtcB homolog from Danio rerio (Zebrafish).